The chain runs to 32 residues: MSDIN-like toxin proprotein 3 (32 aa).

The propeptide occupies 1–10; the sequence is MSDINATRLP. Positions 11 to 17 form a cross-link, cyclopeptide (Ser-Pro); that stretch reads SFFFPIP. Residues 18 to 32 constitute a propeptide that is removed on maturation; sequence CISDDIEMVLTRGER.

This sequence belongs to the MSDIN fungal toxin family. Post-translationally, processed by the macrocyclase-peptidase enzyme POPB to yield a toxic cyclic heptapeptide. POPB first removes 10 residues from the N-terminus. Conformational trapping of the remaining peptide forces the enzyme to release this intermediate rather than proceed to macrocyclization. The enzyme rebinds the remaining peptide in a different conformation and catalyzes macrocyclization of the N-terminal 8 residues.

Its function is as follows. Probable toxin that belongs to the MSDIN-like toxin family responsible for a large number of food poisoning cases and deaths. The sequence is that of MSDIN-like toxin proprotein 3 from Amanita phalloides (Death cap).